Reading from the N-terminus, the 210-residue chain is Uracil phosphoribosyltransferase (210 aa).

5-phospho-alpha-D-ribose 1-diphosphate contacts are provided by residues Arg-80, Arg-105, and 132–140 (DPMLATGGS). Uracil-binding positions include Ile-195 and 200–202 (GDA). Asp-201 provides a ligand contact to 5-phospho-alpha-D-ribose 1-diphosphate.

The protein belongs to the UPRTase family. Requires Mg(2+) as cofactor.

It carries out the reaction UMP + diphosphate = 5-phospho-alpha-D-ribose 1-diphosphate + uracil. The protein operates within pyrimidine metabolism; UMP biosynthesis via salvage pathway; UMP from uracil: step 1/1. Allosterically activated by GTP. Catalyzes the conversion of uracil and 5-phospho-alpha-D-ribose 1-diphosphate (PRPP) to UMP and diphosphate. This chain is Uracil phosphoribosyltransferase, found in Deinococcus radiodurans (strain ATCC 13939 / DSM 20539 / JCM 16871 / CCUG 27074 / LMG 4051 / NBRC 15346 / NCIMB 9279 / VKM B-1422 / R1).